The primary structure comprises 780 residues: Chloride channel protein CLC-b (780 aa).

Positions M1–N28 are disordered. 12 helical membrane-spanning segments follow: residues T87 to V107, G130 to V150, F177 to L197, L205 to R225, G247 to L267, A277 to I297, V327 to Y347, V370 to L390, M452 to I472, G477 to M497, A509 to V529, and I530 to I550. 2 CBS domains span residues A594–E663 and T708–L770. The chain crosses the membrane as a helical span at residues H735 to T755.

Belongs to the chloride channel (TC 2.A.49) family. In terms of assembly, homodimer. Interacts with PP2A5. As to expression, broadly expressed in the plant.

The protein resides in the membrane. Its function is as follows. Voltage-gated chloride channel. This is Chloride channel protein CLC-b (CLC-B) from Arabidopsis thaliana (Mouse-ear cress).